Here is a 123-residue protein sequence, read N- to C-terminus: Secreted RxLR effector protein RXLR-C21 (123 aa).

Positions 1 to 23 are cleaved as a signal peptide; it reads MRLHLLVLSVIVVSLLVSDNAHA. The RxLR-dEER signature appears at 32 to 65; sequence RALRETPINGLVTNQLAVSRNLTPAKFITNSEER. Residues 101–121 traverse the membrane as a helical segment; the sequence is VTTICSIVLFVMVFGCLYKIF.

This sequence belongs to the RxLR effector family.

The protein resides in the secreted. The protein localises to the host endoplasmic reticulum membrane. Its function is as follows. Secreted effector that does not suppress pattern-triggered immunity (PTI) in plant host. The sequence is that of Secreted RxLR effector protein RXLR-C21 from Plasmopara halstedii (Downy mildew of sunflower).